Reading from the N-terminus, the 119-residue chain is UPF0102 protein Sare_1228 (119 aa).

It belongs to the UPF0102 family.

This is UPF0102 protein Sare_1228 from Salinispora arenicola (strain CNS-205).